Reading from the N-terminus, the 412-residue chain is Phosphoglycerate kinase (412 aa).

Residues 22–24, Arg37, 60–63, Arg120, and Arg172 contribute to the substrate site; these read DFN and HLGK. Residues Lys223, Gly310, Glu341, and 368 to 371 each bind ATP; that span reads GGDS.

This sequence belongs to the phosphoglycerate kinase family. As to quaternary structure, monomer.

Its subcellular location is the cytoplasm. The catalysed reaction is (2R)-3-phosphoglycerate + ATP = (2R)-3-phospho-glyceroyl phosphate + ADP. It functions in the pathway carbohydrate degradation; glycolysis; pyruvate from D-glyceraldehyde 3-phosphate: step 2/5. This chain is Phosphoglycerate kinase, found in Spiroplasma citri.